Here is a 398-residue protein sequence, read N- to C-terminus: 1-deoxy-D-xylulose 5-phosphate reductoisomerase (398 aa).

Residues Thr-10, Gly-11, Ser-12, Ile-13, Lys-37, Asn-38, and Asn-124 each contribute to the NADPH site. Lys-125 lines the 1-deoxy-D-xylulose 5-phosphate pocket. Glu-126 contacts NADPH. Residue Asp-150 coordinates Mn(2+). The 1-deoxy-D-xylulose 5-phosphate site is built by Ser-151, Glu-152, Ser-186, and His-209. Residue Glu-152 coordinates Mn(2+). Residue Gly-215 coordinates NADPH. Residues Ser-222, Asn-227, Lys-228, and Glu-231 each contribute to the 1-deoxy-D-xylulose 5-phosphate site. Residue Glu-231 participates in Mn(2+) binding.

The protein belongs to the DXR family. In terms of assembly, homodimer. Mg(2+) is required as a cofactor. It depends on Mn(2+) as a cofactor.

It carries out the reaction 2-C-methyl-D-erythritol 4-phosphate + NADP(+) = 1-deoxy-D-xylulose 5-phosphate + NADPH + H(+). Its pathway is isoprenoid biosynthesis; isopentenyl diphosphate biosynthesis via DXP pathway; isopentenyl diphosphate from 1-deoxy-D-xylulose 5-phosphate: step 1/6. Functionally, catalyzes the NADPH-dependent rearrangement and reduction of 1-deoxy-D-xylulose-5-phosphate (DXP) to 2-C-methyl-D-erythritol 4-phosphate (MEP). In Buchnera aphidicola subsp. Acyrthosiphon pisum (strain APS) (Acyrthosiphon pisum symbiotic bacterium), this protein is 1-deoxy-D-xylulose 5-phosphate reductoisomerase.